The following is a 91-amino-acid chain: Probable Fe(2+)-trafficking protein (91 aa).

It belongs to the Fe(2+)-trafficking protein family.

Could be a mediator in iron transactions between iron acquisition and iron-requiring processes, such as synthesis and/or repair of Fe-S clusters in biosynthetic enzymes. The polypeptide is Probable Fe(2+)-trafficking protein (Histophilus somni (strain 129Pt) (Haemophilus somnus)).